Consider the following 160-residue polypeptide: Major pollen allergen Bet v 1-B (160 aa).

Positions 55, 82, 84, and 101 each coordinate brassinolide.

This sequence belongs to the BetVI family.

Its subcellular location is the cytoplasm. Its function is as follows. May be a general steroid carrier protein. In Betula pendula (European white birch), this protein is Major pollen allergen Bet v 1-B (BETV1B).